The chain runs to 602 residues: Elongation factor 4 (602 aa).

A tr-type G domain is found at 7–188 (ENIRNFSIIA…SIIRLVPPPK (182 aa)). Residues 19–24 (DHGKST) and 135–138 (NKID) each bind GTP.

The protein belongs to the TRAFAC class translation factor GTPase superfamily. Classic translation factor GTPase family. LepA subfamily.

It localises to the cell inner membrane. It catalyses the reaction GTP + H2O = GDP + phosphate + H(+). Functionally, required for accurate and efficient protein synthesis under certain stress conditions. May act as a fidelity factor of the translation reaction, by catalyzing a one-codon backward translocation of tRNAs on improperly translocated ribosomes. Back-translocation proceeds from a post-translocation (POST) complex to a pre-translocation (PRE) complex, thus giving elongation factor G a second chance to translocate the tRNAs correctly. Binds to ribosomes in a GTP-dependent manner. This chain is Elongation factor 4, found in Chlamydia muridarum (strain MoPn / Nigg).